A 502-amino-acid chain; its full sequence is Aspartyl/glutamyl-tRNA(Asn/Gln) amidotransferase subunit B (502 aa).

Belongs to the GatB/GatE family. GatB subfamily. In terms of assembly, heterotrimer of A, B and C subunits.

It catalyses the reaction L-glutamyl-tRNA(Gln) + L-glutamine + ATP + H2O = L-glutaminyl-tRNA(Gln) + L-glutamate + ADP + phosphate + H(+). The enzyme catalyses L-aspartyl-tRNA(Asn) + L-glutamine + ATP + H2O = L-asparaginyl-tRNA(Asn) + L-glutamate + ADP + phosphate + 2 H(+). In terms of biological role, allows the formation of correctly charged Asn-tRNA(Asn) or Gln-tRNA(Gln) through the transamidation of misacylated Asp-tRNA(Asn) or Glu-tRNA(Gln) in organisms which lack either or both of asparaginyl-tRNA or glutaminyl-tRNA synthetases. The reaction takes place in the presence of glutamine and ATP through an activated phospho-Asp-tRNA(Asn) or phospho-Glu-tRNA(Gln). The sequence is that of Aspartyl/glutamyl-tRNA(Asn/Gln) amidotransferase subunit B from Brucella suis (strain ATCC 23445 / NCTC 10510).